A 198-amino-acid chain; its full sequence is Putative pseudouridine methyltransferase (198 aa).

Residues M132 and C186 each coordinate S-adenosyl-L-methionine.

Belongs to the methyltransferase superfamily. TrmY family.

The protein resides in the cytoplasm. In Shewanella baltica (strain OS223), this protein is Putative pseudouridine methyltransferase.